The primary structure comprises 935 residues: Probable mediator of RNA polymerase II transcription subunit 15c (935 aa).

Polar residues predominate over residues 1-13 (MEGNTNWKPNEQG). Disordered stretches follow at residues 1–28 (MEGN…WRSQ), 170–190 (NLPT…VSSS), 495–526 (SSVQ…HQMQ), 548–611 (QQVS…PVPG), and 635–654 (SSSK…PPEP). The span at 511–526 (MQQQQPQQGNHQHQMQ) shows a compositional bias: low complexity. Polar residues-rich tracts occupy residues 548–577 (QQVS…SPQL) and 635–644 (SSSKLGTQET).

This sequence belongs to the plant Mediator complex subunit 15 family. As to quaternary structure, component of the Mediator complex.

The protein localises to the nucleus. Functionally, component of the Mediator complex, a coactivator involved in the regulated transcription of nearly all RNA polymerase II-dependent genes. Mediator functions as a bridge to convey information from gene-specific regulatory proteins to the basal RNA polymerase II transcription machinery. The Mediator complex, having a compact conformation in its free form, is recruited to promoters by direct interactions with regulatory proteins and serves for the assembly of a functional preinitiation complex with RNA polymerase II and the general transcription factors. The chain is Probable mediator of RNA polymerase II transcription subunit 15c (MED15C) from Arabidopsis thaliana (Mouse-ear cress).